Here is a 475-residue protein sequence, read N- to C-terminus: UDP-N-acetylmuramate--L-alanine ligase (475 aa).

118–124 (GTHGKTT) contributes to the ATP binding site.

It belongs to the MurCDEF family.

It localises to the cytoplasm. It carries out the reaction UDP-N-acetyl-alpha-D-muramate + L-alanine + ATP = UDP-N-acetyl-alpha-D-muramoyl-L-alanine + ADP + phosphate + H(+). The protein operates within cell wall biogenesis; peptidoglycan biosynthesis. Its function is as follows. Cell wall formation. This chain is UDP-N-acetylmuramate--L-alanine ligase, found in Paracoccus denitrificans (strain Pd 1222).